We begin with the raw amino-acid sequence, 127 residues long: Protein chibby homolog 1 (127 aa).

The span at 1–10 (MPLFGSTFSP) shows a compositional bias: polar residues. The tract at residues 1 to 26 (MPLFGSTFSPKKTPPRKSASLSNLHN) is disordered. Phosphoserine is present on residues S9 and S20. The interval 60–112 (IAETGISGGVDRREAQRLRRRNQQLEEENNLLRLKVDILLDMLSETTAESHLM) is minimal region for the interaction with PKD2. A coiled-coil region spans residues 68 to 125 (GVDRREAQRLRRRNQQLEEENNLLRLKVDILLDMLSETTAESHLMEKELDELKSVSRR). The interval 77 to 98 (LRRRNQQLEEENNLLRLKVDIL) is leucine-zipper; mediates homodimerization.

The protein belongs to the chibby family. As to quaternary structure, homodimer. Homodimerization is essential for nuclear localization and interaction with KPNA4 but is dispensable for interaction with CTNNB1. Interacts with polycystin-2/PKD2 and GM130. Interacts with the C-terminal region of CTNNB1. Interacts (C-terminus) with TCIM (C-terminus), TCIM competes with CTNNB1 for the interaction with CBY1. Interacts with FAM92A; this interaction facilitates targeting of FAM92A to cilium basal body. Interacts with CIBAR2. Interacts with KPNA4.

Its subcellular location is the nucleus speckle. The protein localises to the cytoplasm. It is found in the cytoskeleton. The protein resides in the cilium basal body. It localises to the microtubule organizing center. Its subcellular location is the centrosome. The protein localises to the centriole. It is found in the golgi apparatus. The protein resides in the trans-Golgi network. It localises to the cell projection. Its subcellular location is the cilium. The protein localises to the flagellum. It is found in the nucleus. Inhibits the Wnt/Wingless pathway by binding to CTNNB1/beta-catenin and inhibiting beta-catenin-mediated transcriptional activation through competition with TCF/LEF transcription factors. Has also been shown to play a role in regulating the intracellular trafficking of polycystin-2/PKD2 and possibly of other intracellular proteins. Promotes adipocyte and cardiomyocyte differentiation. This is Protein chibby homolog 1 (CBY1) from Bos taurus (Bovine).